Consider the following 454-residue polypeptide: Retinoblastoma-binding protein homolog 5 (454 aa).

6 WD repeats span residues 23-64 (LQNA…RTFS), 65-104 (AHCL…LLHR), 153-192 (SSDE…CVAW), 196-235 (NTVQ…HQRG), 248-288 (VNKA…LIKI), and 292-330 (NKGE…NWSA).

As to quaternary structure, component of the SET2 complex (also known as the SET1/COMPASS complex), which contains at least set-2, swd-2.1, cfp-1, rbbp-5, wdr-5.1, dpy-30 and ash-2.

It localises to the nucleus. Its function is as follows. Required for di- and trimethylation at 'Lys-4' of histone H3. Regulates left/right asymmetry of ASE sensory neurons, via its role as a component of the SET2 complex. The sequence is that of Retinoblastoma-binding protein homolog 5 (rbbp-5) from Caenorhabditis elegans.